A 317-amino-acid chain; its full sequence is Pectinesterase 31 (317 aa).

The substrate site is built by threonine 91 and glutamine 121. Aspartate 144 functions as the Proton donor in the catalytic mechanism. The Nucleophile role is filled by aspartate 165. Substrate contacts are provided by arginine 222 and tryptophan 224.

Belongs to the pectinesterase family. In terms of tissue distribution, expressed in siliques.

The enzyme catalyses [(1-&gt;4)-alpha-D-galacturonosyl methyl ester](n) + n H2O = [(1-&gt;4)-alpha-D-galacturonosyl](n) + n methanol + n H(+). It participates in glycan metabolism; pectin degradation; 2-dehydro-3-deoxy-D-gluconate from pectin: step 1/5. Its activity is regulated as follows. Does not require salt for activity. Not inhibited by kiwi pectin methylesterase inhibitor (PMEI). Acts in the modification of cell walls via demethylesterification of cell wall pectin. Acts in a blockwise manner, resulting in a cell wall rigidification. The sequence is that of Pectinesterase 31 (PME31) from Arabidopsis thaliana (Mouse-ear cress).